We begin with the raw amino-acid sequence, 1462 residues long: Gag-Pro-Pol polyprotein (1462 aa).

The N-myristoyl glycine; by host moiety is linked to residue Gly2. Residues 93–144 (QIPSRPAPPPPSSPTHDPPDSDPQIPPPYVEPTAPQVLPVMHPHGAPPNHRP) are disordered. The residue at position 105 (Ser105) is a Phosphoserine; by host MAPK1. The PPXY motif signature appears at 118–121 (PPPY). A PTAP/PSAP motif motif is present at residues 124 to 127 (PTAP). 2 consecutive CCHC-type zinc fingers follow at residues 355-372 (QPCFRCGKAGHWSRDCTQ) and 378-395 (GPCPLCQDPTHWKRDCPR). The region spanning 476–554 (IEALLDTGAD…NNWAIIGRDA (79 aa)) is the Peptidase A2 domain. The active-site For protease activity; shared with dimeric partner is Asp481. The Reverse transcriptase domain occupies 614-804 (LEAGHIEPYT…GTIKFLGQII (191 aa)). Positions 680, 755, 756, 1040, 1074, 1096, 1157, 1230, and 1287 each coordinate Mg(2+). The 135-residue stretch at 1031-1165 (INTAPCLFSD…TDALLITPVL (135 aa)) folds into the RNase H type-1 domain. An Integrase catalytic domain is found at 1219–1388 (RGLLPNHIWQ…QPIPETRSLS (170 aa)). The segment at residues 1393-1443 (HWYYFKLPGLNSRQWKGPQEALQEAAGAALIPVSASSAQWIPWRLLKRAAC) is a DNA-binding region (integrase-type).

Homodimer; the homodimers are part of the immature particles. Interacts with human TSG101 and NEDD4; these interactions are essential for budding and release of viral particles. As to quaternary structure, homodimer; further assembles as homohexamers. Mg(2+) is required as a cofactor. Phosphorylation of the matrix protein p19 by MAPK1 seems to play a role in budding. In terms of processing, myristoylated. Myristoylation of the matrix (MA) domain mediates the transport and binding of Gag polyproteins to the host plasma membrane and is required for the assembly of viral particles. Post-translationally, specific enzymatic cleavages by the viral protease yield mature proteins. The polyprotein is cleaved during and after budding, this process is termed maturation. The protease is autoproteolytically processed at its N- and C-termini.

The protein resides in the virion. It carries out the reaction Endonucleolytic cleavage to 5'-phosphomonoester.. The enzyme catalyses DNA(n) + a 2'-deoxyribonucleoside 5'-triphosphate = DNA(n+1) + diphosphate. Functionally, the matrix domain targets Gag, Gag-Pro and Gag-Pro-Pol polyproteins to the plasma membrane via a multipartite membrane binding signal, that includes its myristoylated N-terminus. In terms of biological role, matrix protein. Its function is as follows. Forms the spherical core of the virus that encapsulates the genomic RNA-nucleocapsid complex. Binds strongly to viral nucleic acids and promote their aggregation. Also destabilizes the nucleic acids duplexes via highly structured zinc-binding motifs. Functionally, the aspartyl protease mediates proteolytic cleavages of Gag and Gag-Pol polyproteins during or shortly after the release of the virion from the plasma membrane. Cleavages take place as an ordered, step-wise cascade to yield mature proteins. This process is called maturation. Displays maximal activity during the budding process just prior to particle release from the cell. Cleaves the translation initiation factor eIF4G leading to the inhibition of host cap-dependent translation. In terms of biological role, RT is a multifunctional enzyme that converts the viral RNA genome into dsDNA in the cytoplasm, shortly after virus entry into the cell. This enzyme displays a DNA polymerase activity that can copy either DNA or RNA templates, and a ribonuclease H (RNase H) activity that cleaves the RNA strand of RNA-DNA heteroduplexes in a partially processive 3' to 5'-endonucleasic mode. Conversion of viral genomic RNA into dsDNA requires many steps. A tRNA-Pro binds to the primer-binding site (PBS) situated at the 5'-end of the viral RNA. RT uses the 3' end of the tRNA primer to perform a short round of RNA-dependent minus-strand DNA synthesis. The reading proceeds through the U5 region and ends after the repeated (R) region which is present at both ends of viral RNA. The portion of the RNA-DNA heteroduplex is digested by the RNase H, resulting in a ssDNA product attached to the tRNA primer. This ssDNA/tRNA hybridizes with the identical R region situated at the 3' end of viral RNA. This template exchange, known as minus-strand DNA strong stop transfer, can be either intra- or intermolecular. RT uses the 3' end of this newly synthesized short ssDNA to perform the RNA-dependent minus-strand DNA synthesis of the whole template. RNase H digests the RNA template except for a polypurine tract (PPT) situated at the 5' end of the genome. It is not clear if both polymerase and RNase H activities are simultaneous. RNase H probably can proceed both in a polymerase-dependent (RNA cut into small fragments by the same RT performing DNA synthesis) and a polymerase-independent mode (cleavage of remaining RNA fragments by free RTs). Secondly, RT performs DNA-directed plus-strand DNA synthesis using the PPT that has not been removed by RNase H as primer. PPT and tRNA primers are then removed by RNase H. The 3' and 5' ssDNA PBS regions hybridize to form a circular dsDNA intermediate. Strand displacement synthesis by RT to the PBS and PPT ends produces a blunt ended, linear dsDNA copy of the viral genome that includes long terminal repeats (LTRs) at both ends. Its function is as follows. Catalyzes viral DNA integration into the host chromosome, by performing a series of DNA cutting and joining reactions. The sequence is that of Gag-Pro-Pol polyprotein (gag-pro-pol) from Homo sapiens (Human).